The sequence spans 404 residues: Cysteine desulfurase IscS (404 aa).

Residues 75–76 (AT), asparagine 155, glutamine 183, and 203–205 (SAH) contribute to the pyridoxal 5'-phosphate site. Lysine 206 is subject to N6-(pyridoxal phosphate)lysine. A pyridoxal 5'-phosphate-binding site is contributed by threonine 243. The Cysteine persulfide intermediate role is filled by cysteine 328. Cysteine 328 lines the [2Fe-2S] cluster pocket.

Belongs to the class-V pyridoxal-phosphate-dependent aminotransferase family. NifS/IscS subfamily. As to quaternary structure, homodimer. Forms a heterotetramer with IscU, interacts with other sulfur acceptors. The cofactor is pyridoxal 5'-phosphate.

It is found in the cytoplasm. The catalysed reaction is (sulfur carrier)-H + L-cysteine = (sulfur carrier)-SH + L-alanine. Its pathway is cofactor biosynthesis; iron-sulfur cluster biosynthesis. Functionally, master enzyme that delivers sulfur to a number of partners involved in Fe-S cluster assembly, tRNA modification or cofactor biosynthesis. Catalyzes the removal of elemental sulfur atoms from cysteine to produce alanine. Functions as a sulfur delivery protein for Fe-S cluster synthesis onto IscU, an Fe-S scaffold assembly protein, as well as other S acceptor proteins. This is Cysteine desulfurase IscS from Vibrio vulnificus (strain YJ016).